Here is an 86-residue protein sequence, read N- to C-terminus: Protein Tat (86 aa).

Positions 1–21 (MDPVDPNIEPWNHPGSQPKTA) are disordered. Positions 1-24 (MDPVDPNIEPWNHPGSQPKTACNR) are interaction with human CREBBP. The interval 1-48 (MDPVDPNIEPWNHPGSQPKTACNRCHCKKCCYHCQVCFITKGLGISYG) is transactivation. Residues Cys22, Cys25, and Cys27 each coordinate Zn(2+). Positions 22 to 37 (CNRCHCKKCCYHCQVC) are cysteine-rich. Lys28 carries the N6-acetyllysine; by host PCAF modification. Residues Cys30, His33, Cys34, and Cys37 each contribute to the Zn(2+) site. The tract at residues 38 to 48 (FITKGLGISYG) is core. The interval 47–86 (YGRKKRRQRRRPSQGGQTHQDPIPKQPSSQPRGDPTGPKE) is disordered. The span at 48-58 (GRKKRRQRRRP) shows a compositional bias: basic residues. The short motif at 49–57 (RKKRRQRRR) is the Nuclear localization signal, RNA-binding (TAR), and protein transduction element. The segment at 49 to 86 (RKKRRQRRRPSQGGQTHQDPIPKQPSSQPRGDPTGPKE) is interaction with the host capping enzyme RNGTT. N6-acetyllysine; by host EP300 and GCN5L2 occurs at positions 50 and 51. 2 positions are modified to asymmetric dimethylarginine; by host PRMT6: Arg52 and Arg53. Over residues 60 to 77 (QGGQTHQDPIPKQPSSQP) the composition is skewed to polar residues. Lys71 participates in a covalent cross-link: Glycyl lysine isopeptide (Lys-Gly) (interchain with G-Cter in ubiquitin). Residues 78–80 (RGD) carry the Cell attachment site motif.

Belongs to the lentiviruses Tat family. In terms of assembly, interacts with host CCNT1. Associates with the P-TEFb complex composed at least of Tat, P-TEFb (CDK9 and CCNT1), TAR RNA, RNA Pol II. Recruits the HATs CREBBP, TAF1/TFIID, EP300, PCAF and GCN5L2. Interacts with host KAT5/Tip60; this interaction targets the latter to degradation. Interacts with the host deacetylase SIRT1. Interacts with host capping enzyme RNGTT; this interaction stimulates RNGTT. Binds to host KDR, and to the host integrins ITGAV/ITGB3 and ITGA5/ITGB1. Interacts with host KPNB1/importin beta-1 without previous binding to KPNA1/importin alpha-1. Interacts with EIF2AK2. Interacts with host nucleosome assembly protein NAP1L1; this interaction may be required for the transport of Tat within the nucleus, since the two proteins interact at the nuclear rim. Interacts with host C1QBP/SF2P32; this interaction involves lysine-acetylated Tat. Interacts with the host chemokine receptors CCR2, CCR3 and CXCR4. Interacts with host DPP4/CD26; this interaction may trigger an anti-proliferative effect. Interacts with host LDLR. Interacts with the host extracellular matrix metalloproteinase MMP1. Interacts with host PRMT6; this interaction mediates Tat's methylation. Interacts with, and is ubiquitinated by MDM2/Hdm2. Interacts with host PSMC3 and HTATIP2. Interacts with STAB1; this interaction may overcome SATB1-mediated repression of IL2 and IL2RA (interleukin) in T cells by binding to the same domain than HDAC1. Interacts (when acetylated) with human CDK13, thereby increasing HIV-1 mRNA splicing and promoting the production of the doubly spliced HIV-1 protein Nef. Interacts with host TBP; this interaction modulates the activity of transcriptional pre-initiation complex. Interacts with host RELA. Interacts with host PLSCR1; this interaction negatively regulates Tat transactivation activity by altering its subcellular distribution. Asymmetrical arginine methylation by host PRMT6 seems to diminish the transactivation capacity of Tat and affects the interaction with host CCNT1. In terms of processing, acetylation by EP300, CREBBP, GCN5L2/GCN5 and PCAF regulates the transactivation activity of Tat. EP300-mediated acetylation of Lys-50 promotes dissociation of Tat from the TAR RNA through the competitive binding to PCAF's bromodomain. In addition, the non-acetylated Tat's N-terminus can also interact with PCAF. PCAF-mediated acetylation of Lys-28 enhances Tat's binding to CCNT1. Lys-50 is deacetylated by SIRT1. Post-translationally, polyubiquitination by host MDM2 does not target Tat to degradation, but activates its transactivation function and fosters interaction with CCNT1 and TAR RNA. Phosphorylated by EIF2AK2 on serine and threonine residues adjacent to the basic region important for TAR RNA binding and function. Phosphorylation of Tat by EIF2AK2 is dependent on the prior activation of EIF2AK2 by dsRNA.

Its subcellular location is the host nucleus. The protein resides in the host nucleolus. The protein localises to the host cytoplasm. It localises to the secreted. Functionally, transcriptional activator that increases RNA Pol II processivity, thereby increasing the level of full-length viral transcripts. Recognizes a hairpin structure at the 5'-LTR of the nascent viral mRNAs referred to as the transactivation responsive RNA element (TAR) and recruits the cyclin T1-CDK9 complex (P-TEFb complex) that will in turn hyperphosphorylate the RNA polymerase II to allow efficient elongation. The CDK9 component of P-TEFb and other Tat-activated kinases hyperphosphorylate the C-terminus of RNA Pol II that becomes stabilized and much more processive. Other factors such as HTATSF1/Tat-SF1, SUPT5H/SPT5, and HTATIP2 are also important for Tat's function. Besides its effect on RNA Pol II processivity, Tat induces chromatin remodeling of proviral genes by recruiting the histone acetyltransferases (HATs) CREBBP, EP300 and PCAF to the chromatin. This also contributes to the increase in proviral transcription rate, especially when the provirus integrates in transcriptionally silent region of the host genome. To ensure maximal activation of the LTR, Tat mediates nuclear translocation of NF-kappa-B by interacting with host RELA. Through its interaction with host TBP, Tat may also modulate transcription initiation. Tat can reactivate a latently infected cell by penetrating in it and transactivating its LTR promoter. In the cytoplasm, Tat is thought to act as a translational activator of HIV-1 mRNAs. In terms of biological role, extracellular circulating Tat can be endocytosed by surrounding uninfected cells via the binding to several surface receptors such as CD26, CXCR4, heparan sulfate proteoglycans (HSPG) or LDLR. Neurons are rarely infected, but they internalize Tat via their LDLR. Through its interaction with nuclear HATs, Tat is potentially able to control the acetylation-dependent cellular gene expression. Modulates the expression of many cellular genes involved in cell survival, proliferation or in coding for cytokines or cytokine receptors. Tat plays a role in T-cell and neurons apoptosis. Tat induced neurotoxicity and apoptosis probably contribute to neuroAIDS. Circulating Tat also acts as a chemokine-like and/or growth factor-like molecule that binds to specific receptors on the surface of the cells, affecting many cellular pathways. In the vascular system, Tat binds to ITGAV/ITGB3 and ITGA5/ITGB1 integrins dimers at the surface of endothelial cells and competes with bFGF for heparin-binding sites, leading to an excess of soluble bFGF. The sequence is that of Protein Tat from Human immunodeficiency virus type 1 group M subtype D (isolate Z2/CDC-Z34) (HIV-1).